The chain runs to 279 residues: Replication factor A protein 2 (279 aa).

Positions 26 to 47 (GAGFNEYDQSSQPSVDRQQGAG) are disordered. A compositionally biased stretch (polar residues) spans 32-46 (YDQSSQPSVDRQQGA). The OB DNA-binding region spans 80–140 (VTFVGVLRNI…GNIKIFSGKI (61 aa)).

This sequence belongs to the replication factor A protein 2 family. Heterotrimer of 68, 30, and 12 kDa chains. Phosphorylated in a cell cycle-dependent manner. Hypophosphorylated in G1, becomes phosphorylated at the G1/S boundary, it is maintained in this state through the M phase.

It localises to the nucleus. Functionally, binds to single-stranded sequences. The protein is Replication factor A protein 2 (ssb2) of Schizosaccharomyces pombe (strain 972 / ATCC 24843) (Fission yeast).